We begin with the raw amino-acid sequence, 192 residues long: Ribose 1,5-bisphosphate phosphokinase PhnN (192 aa).

15-22 (GPSGAGKD) lines the ATP pocket.

It belongs to the ribose 1,5-bisphosphokinase family.

It carries out the reaction alpha-D-ribose 1,5-bisphosphate + ATP = 5-phospho-alpha-D-ribose 1-diphosphate + ADP. The protein operates within metabolic intermediate biosynthesis; 5-phospho-alpha-D-ribose 1-diphosphate biosynthesis; 5-phospho-alpha-D-ribose 1-diphosphate from D-ribose 5-phosphate (route II): step 3/3. Its function is as follows. Catalyzes the phosphorylation of ribose 1,5-bisphosphate to 5-phospho-D-ribosyl alpha-1-diphosphate (PRPP). In Brucella melitensis biotype 2 (strain ATCC 23457), this protein is Ribose 1,5-bisphosphate phosphokinase PhnN.